The chain runs to 300 residues: N-acetylmuramic acid 6-phosphate etherase (300 aa).

The region spanning 57–220 is the SIS domain; it reads VSAAFARQGR…SSAAMIRSGK (164 aa). E85 (proton donor) is an active-site residue. Residue E116 is part of the active site.

This sequence belongs to the GCKR-like family. MurNAc-6-P etherase subfamily. In terms of assembly, homodimer.

It catalyses the reaction N-acetyl-D-muramate 6-phosphate + H2O = N-acetyl-D-glucosamine 6-phosphate + (R)-lactate. The protein operates within amino-sugar metabolism; N-acetylmuramate degradation. It functions in the pathway amino-sugar metabolism; 1,6-anhydro-N-acetylmuramate degradation. Its pathway is cell wall biogenesis; peptidoglycan recycling. In terms of biological role, specifically catalyzes the cleavage of the D-lactyl ether substituent of MurNAc 6-phosphate, producing GlcNAc 6-phosphate and D-lactate. Together with AnmK, is also required for the utilization of anhydro-N-acetylmuramic acid (anhMurNAc) either imported from the medium or derived from its own cell wall murein, and thus plays a role in cell wall recycling. The sequence is that of N-acetylmuramic acid 6-phosphate etherase from Edwardsiella ictaluri (strain 93-146).